A 137-amino-acid chain; its full sequence is Large ribosomal subunit protein uL16 (137 aa).

Residues 1 to 22 (MLQPKRTKFRKQQKGRNRGLAH) form a disordered region.

This sequence belongs to the universal ribosomal protein uL16 family. In terms of assembly, part of the 50S ribosomal subunit.

In terms of biological role, binds 23S rRNA and is also seen to make contacts with the A and possibly P site tRNAs. This Saccharophagus degradans (strain 2-40 / ATCC 43961 / DSM 17024) protein is Large ribosomal subunit protein uL16.